Reading from the N-terminus, the 237-residue chain is tRNA (guanine-N(7)-)-methyltransferase (237 aa).

Asp-35, Glu-60, Asn-87, and Asp-113 together coordinate S-adenosyl-L-methionine. Asp-113 is a catalytic residue. Substrate is bound by residues Lys-117 and Asp-149.

It belongs to the class I-like SAM-binding methyltransferase superfamily. TrmB family.

The catalysed reaction is guanosine(46) in tRNA + S-adenosyl-L-methionine = N(7)-methylguanosine(46) in tRNA + S-adenosyl-L-homocysteine. It participates in tRNA modification; N(7)-methylguanine-tRNA biosynthesis. Catalyzes the formation of N(7)-methylguanine at position 46 (m7G46) in tRNA. This chain is tRNA (guanine-N(7)-)-methyltransferase, found in Synechococcus sp. (strain WH7803).